Consider the following 381-residue polypeptide: Chaperone protein DnaJ (381 aa).

Residues 5-70 enclose the J domain; sequence DYYDVLGVSK…EKKAAYDRFG (66 aa). The segment at 140–218 adopts a CR-type zinc-finger fold; the sequence is GLQKTINVPT…CRGQGRVEKD (79 aa). Zn(2+)-binding residues include cysteine 153, cysteine 156, cysteine 170, cysteine 173, cysteine 192, cysteine 195, cysteine 206, and cysteine 209. 4 CXXCXGXG motif repeats span residues 153 to 160, 170 to 177, 192 to 199, and 206 to 213; these read CSSCEGTG, CPTCSGMG, CPTCSGLG, and CKSCRGQG.

This sequence belongs to the DnaJ family. As to quaternary structure, homodimer. Zn(2+) serves as cofactor.

It localises to the cytoplasm. Participates actively in the response to hyperosmotic and heat shock by preventing the aggregation of stress-denatured proteins and by disaggregating proteins, also in an autonomous, DnaK-independent fashion. Unfolded proteins bind initially to DnaJ; upon interaction with the DnaJ-bound protein, DnaK hydrolyzes its bound ATP, resulting in the formation of a stable complex. GrpE releases ADP from DnaK; ATP binding to DnaK triggers the release of the substrate protein, thus completing the reaction cycle. Several rounds of ATP-dependent interactions between DnaJ, DnaK and GrpE are required for fully efficient folding. Also involved, together with DnaK and GrpE, in the DNA replication of plasmids through activation of initiation proteins. This chain is Chaperone protein DnaJ, found in Ruegeria pomeroyi (strain ATCC 700808 / DSM 15171 / DSS-3) (Silicibacter pomeroyi).